The chain runs to 72 residues: UPF0346 protein GK1571 (72 aa).

Belongs to the UPF0346 family.

The polypeptide is UPF0346 protein GK1571 (Geobacillus kaustophilus (strain HTA426)).